The following is a 286-amino-acid chain: Small ribosomal subunit protein uS2 (286 aa).

Residues 213 to 286 (EEQAQNNKWA…GAQEGGEWGS (74 aa)) form a disordered region. Low complexity predominate over residues 227-241 (SPALSAAVPSSAAPV). Polar residues predominate over residues 244-270 (WSSSPSKETTEWGASNTAAAAKSSWSN). Gly residues predominate over residues 274–286 (GEWGAQEGGEWGS).

It belongs to the universal ribosomal protein uS2 family. In terms of assembly, component of the small ribosomal subunit. Mature ribosomes consist of a small (40S) and a large (60S) subunit. The 40S subunit contains about 33 different proteins and 1 molecule of RNA (18S). The 60S subunit contains about 49 different proteins and 3 molecules of RNA (28S, 5.8S and 5S). Interacts with ribosomal protein S21.

It is found in the cytoplasm. Functionally, required for the assembly and/or stability of the 40S ribosomal subunit. Required for the processing of the 20S rRNA-precursor to mature 18S rRNA in a late step of the maturation of 40S ribosomal subunits. This chain is Small ribosomal subunit protein uS2, found in Trichoplax adhaerens (Trichoplax reptans).